Here is a 398-residue protein sequence, read N- to C-terminus: tRNA(Ile)-lysidine synthase (398 aa).

S25–S30 is a binding site for ATP.

Belongs to the tRNA(Ile)-lysidine synthase family.

The protein localises to the cytoplasm. It catalyses the reaction cytidine(34) in tRNA(Ile2) + L-lysine + ATP = lysidine(34) in tRNA(Ile2) + AMP + diphosphate + H(+). In terms of biological role, ligates lysine onto the cytidine present at position 34 of the AUA codon-specific tRNA(Ile) that contains the anticodon CAU, in an ATP-dependent manner. Cytidine is converted to lysidine, thus changing the amino acid specificity of the tRNA from methionine to isoleucine. The polypeptide is tRNA(Ile)-lysidine synthase (Francisella tularensis subsp. tularensis (strain SCHU S4 / Schu 4)).